A 325-amino-acid chain; its full sequence is UDP-N-acetylenolpyruvoylglucosamine reductase (325 aa).

The FAD-binding PCMH-type domain maps to 40 to 221; the sequence is RTGGLAELFY…RAAMDEVALH (182 aa). Arginine 186 is an active-site residue. Residue serine 235 is the Proton donor of the active site. Glutamate 305 is an active-site residue.

The protein belongs to the MurB family. FAD is required as a cofactor.

The protein localises to the cytoplasm. The enzyme catalyses UDP-N-acetyl-alpha-D-muramate + NADP(+) = UDP-N-acetyl-3-O-(1-carboxyvinyl)-alpha-D-glucosamine + NADPH + H(+). Its pathway is cell wall biogenesis; peptidoglycan biosynthesis. In terms of biological role, cell wall formation. This Bartonella henselae (strain ATCC 49882 / DSM 28221 / CCUG 30454 / Houston 1) (Rochalimaea henselae) protein is UDP-N-acetylenolpyruvoylglucosamine reductase.